The sequence spans 456 residues: Enolase (456 aa).

Gln-167 is a (2R)-2-phosphoglycerate binding site. Glu-209 acts as the Proton donor in catalysis. 3 residues coordinate Mg(2+): Asp-250, Glu-312, and Asp-339. (2R)-2-phosphoglycerate is bound by residues Lys-364, Arg-393, Ser-394, and Lys-415. Residue Lys-364 is the Proton acceptor of the active site.

This sequence belongs to the enolase family. It depends on Mg(2+) as a cofactor.

Its subcellular location is the cytoplasm. The protein resides in the secreted. It localises to the cell surface. It catalyses the reaction (2R)-2-phosphoglycerate = phosphoenolpyruvate + H2O. Its pathway is carbohydrate degradation; glycolysis; pyruvate from D-glyceraldehyde 3-phosphate: step 4/5. Its function is as follows. Catalyzes the reversible conversion of 2-phosphoglycerate (2-PG) into phosphoenolpyruvate (PEP). It is essential for the degradation of carbohydrates via glycolysis. This Mycoplasmopsis pulmonis (strain UAB CTIP) (Mycoplasma pulmonis) protein is Enolase.